The primary structure comprises 451 residues: Glyceraldehyde-3-phosphate dehydrogenase B, chloroplastic (451 aa).

The tract at residues 1-25 (MATHAALASTRIPTNTRFPSKTSHS) is disordered. Residues 1–84 (MATHAALAST…STAVKGVTVA (84 aa)) constitute a chloroplast transit peptide. Polar residues predominate over residues 11 to 25 (RIPTNTRFPSKTSHS). Residues 95-96 (RI), aspartate 119, and arginine 164 contribute to the NADP(+) site. D-glyceraldehyde 3-phosphate is bound by residues 238–240 (SCT), threonine 269, arginine 284, 297–298 (TG), and arginine 320. Cysteine 239 acts as the Nucleophile in catalysis. NADP(+) is bound at residue asparagine 403.

The protein belongs to the glyceraldehyde-3-phosphate dehydrogenase family. Tetramer of either four A chains (GAPDH 2) or two A and two B chains (GAPDH 1).

Its subcellular location is the plastid. The protein localises to the chloroplast. It catalyses the reaction D-glyceraldehyde 3-phosphate + phosphate + NADP(+) = (2R)-3-phospho-glyceroyl phosphate + NADPH + H(+). Its pathway is carbohydrate biosynthesis; Calvin cycle. This Pisum sativum (Garden pea) protein is Glyceraldehyde-3-phosphate dehydrogenase B, chloroplastic (GAPB).